A 719-amino-acid polypeptide reads, in one-letter code: Photosystem I P700 chlorophyll a apoprotein A1 (719 aa).

The next 8 membrane-spanning stretches (helical) occupy residues Val-59–Ala-82, Leu-145–His-168, Leu-184–Leu-208, Thr-280–Tyr-298, Trp-335–Tyr-358, Leu-374–Val-400, Ala-422–His-444, and Phe-520–Leu-538. Residues Cys-562 and Cys-571 each coordinate [4Fe-4S] cluster. Transmembrane regions (helical) follow at residues His-578 to Trp-599 and Leu-653 to Phe-675. Residue His-664 participates in chlorophyll a' binding. Met-672 and Tyr-680 together coordinate chlorophyll a. Residue Trp-681 coordinates phylloquinone. Residues Ala-713–Tyr-719 form a helical membrane-spanning segment.

The protein belongs to the PsaA/PsaB family. As to quaternary structure, the PsaA/B heterodimer binds the P700 chlorophyll special pair and subsequent electron acceptors. PSI consists of a core antenna complex that captures photons, and an electron transfer chain that converts photonic excitation into a charge separation. The eukaryotic PSI reaction center is composed of at least 11 subunits. Requires P700 is a chlorophyll a/chlorophyll a' dimer, A0 is one or more chlorophyll a, A1 is one or both phylloquinones and FX is a shared 4Fe-4S iron-sulfur center. as cofactor.

It is found in the plastid. It localises to the chloroplast thylakoid membrane. The catalysed reaction is reduced [plastocyanin] + hnu + oxidized [2Fe-2S]-[ferredoxin] = oxidized [plastocyanin] + reduced [2Fe-2S]-[ferredoxin]. In terms of biological role, psaA and PsaB bind P700, the primary electron donor of photosystem I (PSI), as well as the electron acceptors A0, A1 and FX. PSI is a plastocyanin-ferredoxin oxidoreductase, converting photonic excitation into a charge separation, which transfers an electron from the donor P700 chlorophyll pair to the spectroscopically characterized acceptors A0, A1, FX, FA and FB in turn. Oxidized P700 is reduced on the lumenal side of the thylakoid membrane by plastocyanin. In Encephalartos lebomboensis (Lebombo cycad), this protein is Photosystem I P700 chlorophyll a apoprotein A1.